Here is a 239-residue protein sequence, read N- to C-terminus: MKSERIQTKGFKFKQFSIHGGESGMPVSTDGVMLGAWVNCIPQNKILDIGTGTGLLALMCAQRFPSAQITALDIEITAIEAAKQNFAQSTWSDRLSLHHSDVLQFEPEHRFERIICNPPYFNSGEQSKQSQRATARHTDTLQHSALLNRCHELLTNEGTASFVLPITEGEQFITMALQQGWHLSRLCRVQPSQKKPVHRLLFELAKQACDTQETHLIIHSSEGYSDDFTQLTREFYLKM.

Belongs to the methyltransferase superfamily. tRNA (adenine-N(6)-)-methyltransferase family.

It localises to the cytoplasm. The enzyme catalyses adenosine(37) in tRNA1(Val) + S-adenosyl-L-methionine = N(6)-methyladenosine(37) in tRNA1(Val) + S-adenosyl-L-homocysteine + H(+). Functionally, specifically methylates the adenine in position 37 of tRNA(1)(Val) (anticodon cmo5UAC). This Vibrio campbellii (strain ATCC BAA-1116) protein is tRNA1(Val) (adenine(37)-N6)-methyltransferase.